Here is a 672-residue protein sequence, read N- to C-terminus: Acetoacetyl-CoA synthetase (672 aa).

Belongs to the ATP-dependent AMP-binding enzyme family.

Its subcellular location is the cytoplasm. It is found in the cytosol. The catalysed reaction is acetoacetate + ATP + CoA = acetoacetyl-CoA + AMP + diphosphate. In terms of biological role, converts acetoacetate to acetoacetyl-CoA in the cytosol. Ketone body-utilizing enzyme, responsible for the synthesis of cholesterol and fatty acids. The chain is Acetoacetyl-CoA synthetase (Aacs) from Mus musculus (Mouse).